The chain runs to 171 residues: MKNIVLTGFMATGKTTVGKKVATNMSFGFIDTDKMIEKMANMTVSDIFEKYGEDYFRRLEKAAVIKAARLKNFVIATGGGVVLNPSNIVQLRKNGVVICFVARPEIILRNIGKNKDRPLLMVDNPEEKIRQLLKEREPFYRFADYTIDVSDMTIDEVAEEVIKAYIRLKKG.

Position 11-16 (A11–T16) interacts with ATP. Residue T15 participates in Mg(2+) binding. Positions 33, 57, and 79 each coordinate substrate. R117 lines the ATP pocket. Substrate is bound at residue R136.

This sequence belongs to the shikimate kinase family. Monomer. It depends on Mg(2+) as a cofactor.

It localises to the cytoplasm. The enzyme catalyses shikimate + ATP = 3-phosphoshikimate + ADP + H(+). The protein operates within metabolic intermediate biosynthesis; chorismate biosynthesis; chorismate from D-erythrose 4-phosphate and phosphoenolpyruvate: step 5/7. Its function is as follows. Catalyzes the specific phosphorylation of the 3-hydroxyl group of shikimic acid using ATP as a cosubstrate. In Thermoanaerobacter pseudethanolicus (strain ATCC 33223 / 39E) (Clostridium thermohydrosulfuricum), this protein is Shikimate kinase.